The following is a 461-amino-acid chain: Alcaligin biosynthesis enzyme (461 aa).

9–15 (VAIGIGP) is an FAD binding site.

This sequence belongs to the lysine N(6)-hydroxylase/L-ornithine N(5)-oxygenase family. FAD is required as a cofactor.

It participates in siderophore biosynthesis; alcaligin biosynthesis. The chain is Alcaligin biosynthesis enzyme (alcA) from Bordetella bronchiseptica (strain ATCC BAA-588 / NCTC 13252 / RB50) (Alcaligenes bronchisepticus).